We begin with the raw amino-acid sequence, 223 residues long: Oxaloacetate tautomerase FAHD1, mitochondrial (223 aa).

The N-terminal 30 residues, 1–30 (MATSMIQRMFKQGTKIVCVGRNYAAHAKEL), are a transit peptide targeting the mitochondrion. 3 residues coordinate Mg(2+): glutamate 67, glutamate 69, and aspartate 98.

It belongs to the FAH family. It depends on Mg(2+) as a cofactor. Mn(2+) serves as cofactor.

Its subcellular location is the mitochondrion. It carries out the reaction oxaloacetate = enol-oxaloacetate. In terms of biological role, tautomerase that converts enol-oxaloacetate, a strong inhibitor of succinate dehydrogenase, to the physiological keto form of oxaloacetate. This chain is Oxaloacetate tautomerase FAHD1, mitochondrial, found in Arabidopsis thaliana (Mouse-ear cress).